A 246-amino-acid chain; its full sequence is Proteasome subunit alpha type-6 (246 aa).

This sequence belongs to the peptidase T1A family. The 26S proteasome consists of a 20S proteasome core and two 19S regulatory subunits. The 20S proteasome core is composed of 28 subunits that are arranged in four stacked rings, resulting in a barrel-shaped structure. The two end rings are each formed by seven alpha subunits, and the two central rings are each formed by seven beta subunits. The catalytic chamber with the active sites is on the inside of the barrel.

It is found in the cytoplasm. Its subcellular location is the nucleus. Functionally, the proteasome is a multicatalytic proteinase complex which is characterized by its ability to cleave peptides with Arg, Phe, Tyr, Leu, and Glu adjacent to the leaving group at neutral or slightly basic pH. The proteasome has an ATP-dependent proteolytic activity. The polypeptide is Proteasome subunit alpha type-6 (PAA1) (Nicotiana tabacum (Common tobacco)).